The following is a 248-amino-acid chain: Trypsin II-P29 (248 aa).

The signal sequence occupies residues 1–16; it reads MKFLFLILSCLGAAVA. A propeptide spans 17-25 (activation peptide); that stretch reads FPGGADDDK. In terms of domain architecture, Peptidase S1 spans 26–246; the sequence is IVGGYTCPEH…YVDWIQETIA (221 aa). Disulfide bonds link C32/C162, C50/C66, C134/C235, C141/C208, C173/C187, and C198/C222. Catalysis depends on H65, which acts as the Charge relay system. Ca(2+) contacts are provided by E77, N79, V82, and E87. Catalysis depends on D109, which acts as the Charge relay system. Residue S202 is the Charge relay system of the active site.

It belongs to the peptidase S1 family. Ca(2+) is required as a cofactor. As to expression, high levels are seen in the pancreas while lower levels are found in the liver, spleen and thymus.

It is found in the secreted. It localises to the extracellular space. The enzyme catalyses Preferential cleavage: Arg-|-Xaa, Lys-|-Xaa.. The sequence is that of Trypsin II-P29 from Gallus gallus (Chicken).